The sequence spans 414 residues: V-set and immunoglobulin domain-containing protein 8 (414 aa).

Residues Met-1–Ala-21 form the signal peptide. Ig-like V-type domains are found at residues Val-22–Thr-141 and Pro-146–Ser-257. Residues Val-22–Gly-263 are Extracellular-facing. 2 cysteine pairs are disulfide-bonded: Cys-44–Cys-126 and Cys-167–Cys-239. A helical transmembrane segment spans residues Val-264–Trp-284. Residues Gly-285–Val-414 lie on the Cytoplasmic side of the membrane.

The protein resides in the membrane. The sequence is that of V-set and immunoglobulin domain-containing protein 8 from Homo sapiens (Human).